The chain runs to 453 residues: Ribosomal protein uS12 methylthiotransferase RimO (453 aa).

The 116-residue stretch at 9–124 (PKIGFVSLGC…VMDAVHKHMP (116 aa)) folds into the MTTase N-terminal domain. Cysteine 18, cysteine 54, cysteine 83, cysteine 155, cysteine 159, and cysteine 162 together coordinate [4Fe-4S] cluster. Residues 141–382 (LTPKHFAYLK…MLLQEEISKK (242 aa)) form the Radical SAM core domain. One can recognise a TRAM domain in the interval 385–453 (QAKVGKTMRV…ADAHDLWAEA (69 aa)).

This sequence belongs to the methylthiotransferase family. RimO subfamily. [4Fe-4S] cluster is required as a cofactor.

It localises to the cytoplasm. It carries out the reaction L-aspartate(89)-[ribosomal protein uS12]-hydrogen + (sulfur carrier)-SH + AH2 + 2 S-adenosyl-L-methionine = 3-methylsulfanyl-L-aspartate(89)-[ribosomal protein uS12]-hydrogen + (sulfur carrier)-H + 5'-deoxyadenosine + L-methionine + A + S-adenosyl-L-homocysteine + 2 H(+). In terms of biological role, catalyzes the methylthiolation of an aspartic acid residue of ribosomal protein uS12. In Janthinobacterium sp. (strain Marseille) (Minibacterium massiliensis), this protein is Ribosomal protein uS12 methylthiotransferase RimO.